Consider the following 147-residue polypeptide: Sec-independent protein translocase protein TatB (147 aa).

A helical membrane pass occupies residues 1 to 21 (MFDISFSEILVIAAVALIVIG). The span at 67–88 (EETGRSIENSVHTELDKFRETV) shows a compositional bias: basic and acidic residues. Positions 67 to 147 (EETGRSIENS…GVNRERETAE (81 aa)) are disordered. Residues 103–117 (APAGESSPPQNSSPA) show a composition bias toward low complexity.

This sequence belongs to the TatB family. The Tat system comprises two distinct complexes: a TatABC complex, containing multiple copies of TatA, TatB and TatC subunits, and a separate TatA complex, containing only TatA subunits. Substrates initially bind to the TatABC complex, which probably triggers association of the separate TatA complex to form the active translocon.

It is found in the cell inner membrane. In terms of biological role, part of the twin-arginine translocation (Tat) system that transports large folded proteins containing a characteristic twin-arginine motif in their signal peptide across membranes. Together with TatC, TatB is part of a receptor directly interacting with Tat signal peptides. TatB may form an oligomeric binding site that transiently accommodates folded Tat precursor proteins before their translocation. The sequence is that of Sec-independent protein translocase protein TatB from Nitrosospira multiformis (strain ATCC 25196 / NCIMB 11849 / C 71).